The following is a 267-amino-acid chain: Proteasome subunit alpha (267 aa).

The interval 231–267 is disordered; sequence ETLLQERDSKESAESEEPIESEEGKKTGKKSDADSSD. Composition is skewed to basic and acidic residues over residues 234–243 and 252–267; these read LQERDSKESA and EEGK…DSSD.

Belongs to the peptidase T1A family. As to quaternary structure, the 20S proteasome core is composed of 14 alpha and 14 beta subunits that assemble into four stacked heptameric rings, resulting in a barrel-shaped structure. The two inner rings, each composed of seven catalytic beta subunits, are sandwiched by two outer rings, each composed of seven alpha subunits. The catalytic chamber with the active sites is on the inside of the barrel. Has a gated structure, the ends of the cylinder being occluded by the N-termini of the alpha-subunits. Is capped by the proteasome-associated ATPase, ARC.

The protein localises to the cytoplasm. The protein operates within protein degradation; proteasomal Pup-dependent pathway. The formation of the proteasomal ATPase ARC-20S proteasome complex, likely via the docking of the C-termini of ARC into the intersubunit pockets in the alpha-rings, may trigger opening of the gate for substrate entry. Interconversion between the open-gate and close-gate conformations leads to a dynamic regulation of the 20S proteasome proteolysis activity. In terms of biological role, component of the proteasome core, a large protease complex with broad specificity involved in protein degradation. In Mycobacterium ulcerans (strain Agy99), this protein is Proteasome subunit alpha.